The primary structure comprises 302 residues: Mitochondrial adapter protein MCP1 (302 aa).

A disordered region spans residues 1–35 (MIKLHEVPPEPVDPASLPHDVNAHSPEGDGNPDKR). Residues 1 to 61 (MIKLHEVPPE…RFLWNCQKIS (61 aa)) are Cytoplasmic-facing. The PxP signature appears at 4–12 (LHEVPPEPV). The helical transmembrane segment at 62–82 (VLPMALYFPLHAANTLITPAV) threads the bilayer. Topologically, residues 83-100 (SPDSAPDDVLMMVREILP) are mitochondrial intermembrane. Residues 101–121 (SITTKLLVAGITLHVSAGVLL) traverse the membrane as a helical segment. Residues 122–173 (RIVNNWNKPRRNRHRHLKISAEQDLSQDSIGLTGGISGYLFGLYKTFRIPPQ) are Cytoplasmic-facing. Residues 174-194 (VISGYILVPVLIYHLLIMKWV) traverse the membrane as a helical segment. Topologically, residues 195 to 219 (PNSISTEVDFASIKQLLSSKNRWWK) are mitochondrial intermembrane. The helical transmembrane segment at 220–240 (WLGGLVPLAILLESGVYHIGS) threads the bilayer. The Cytoplasmic segment spans residues 241–258 (GLCRYFGVRKMTSRKKWS). A helical transmembrane segment spans residues 259–276 (TAINLLTLVGFVSLIRLM). Residues 277-302 (KEDSTKLGPNQFESIFKKIRLLLHVN) are Mitochondrial intermembrane-facing.

As to quaternary structure, interacts (via PxP motif) with VPS13 (via SHR-BD domain).

Its subcellular location is the mitochondrion outer membrane. Its function is as follows. Recruits the lipid transfer protein Vps13 to mitochondria thereby promoting vacuole-mitochondria contacts. Involved in mitochondrial lipid homeostasis. The protein is Mitochondrial adapter protein MCP1 of Saccharomyces cerevisiae (strain ATCC 204508 / S288c) (Baker's yeast).